The chain runs to 102 residues: Large ribosomal subunit protein bL21 (102 aa).

This sequence belongs to the bacterial ribosomal protein bL21 family. In terms of assembly, part of the 50S ribosomal subunit. Contacts protein L20.

Functionally, this protein binds to 23S rRNA in the presence of protein L20. In Staphylococcus haemolyticus (strain JCSC1435), this protein is Large ribosomal subunit protein bL21.